The primary structure comprises 357 residues: Anthranilate phosphoribosyltransferase (357 aa).

5-phospho-alpha-D-ribose 1-diphosphate-binding positions include Gly-91, 94-95, Thr-99, 101-104, 119-127, and Ser-131; these read GD, NIST, and KHGNRSVSS. Gly-91 lines the anthranilate pocket. Residue Ser-103 coordinates Mg(2+). Asn-122 contributes to the anthranilate binding site. Arg-177 lines the anthranilate pocket. Positions 235 and 236 each coordinate Mg(2+).

This sequence belongs to the anthranilate phosphoribosyltransferase family. In terms of assembly, homodimer. Mg(2+) is required as a cofactor.

The catalysed reaction is N-(5-phospho-beta-D-ribosyl)anthranilate + diphosphate = 5-phospho-alpha-D-ribose 1-diphosphate + anthranilate. The protein operates within amino-acid biosynthesis; L-tryptophan biosynthesis; L-tryptophan from chorismate: step 2/5. Functionally, catalyzes the transfer of the phosphoribosyl group of 5-phosphorylribose-1-pyrophosphate (PRPP) to anthranilate to yield N-(5'-phosphoribosyl)-anthranilate (PRA). The chain is Anthranilate phosphoribosyltransferase from Shewanella baltica (strain OS195).